The chain runs to 235 residues: UDP-2,3-diacylglucosamine hydrolase (235 aa).

Residues Asp-9, His-11, Asp-42, Asn-80, and His-115 each contribute to the Mn(2+) site. Residue 80 to 81 (NR) coordinates substrate. Residues Asp-123, Ser-161, Lys-165, Lys-168, and His-196 each coordinate substrate. Mn(2+)-binding residues include His-196 and His-198.

It belongs to the LpxH family. Mn(2+) is required as a cofactor.

It localises to the cell inner membrane. It carries out the reaction UDP-2-N,3-O-bis[(3R)-3-hydroxytetradecanoyl]-alpha-D-glucosamine + H2O = 2-N,3-O-bis[(3R)-3-hydroxytetradecanoyl]-alpha-D-glucosaminyl 1-phosphate + UMP + 2 H(+). It participates in glycolipid biosynthesis; lipid IV(A) biosynthesis; lipid IV(A) from (3R)-3-hydroxytetradecanoyl-[acyl-carrier-protein] and UDP-N-acetyl-alpha-D-glucosamine: step 4/6. Hydrolyzes the pyrophosphate bond of UDP-2,3-diacylglucosamine to yield 2,3-diacylglucosamine 1-phosphate (lipid X) and UMP by catalyzing the attack of water at the alpha-P atom. Involved in the biosynthesis of lipid A, a phosphorylated glycolipid that anchors the lipopolysaccharide to the outer membrane of the cell. The polypeptide is UDP-2,3-diacylglucosamine hydrolase (Actinobacillus succinogenes (strain ATCC 55618 / DSM 22257 / CCUG 43843 / 130Z)).